Consider the following 205-residue polypeptide: Small ribosomal subunit protein uS4 (205 aa).

Residues Asn-18–Ser-46 are disordered. The 62-residue stretch at Ser-94–Glu-155 folds into the S4 RNA-binding domain.

This sequence belongs to the universal ribosomal protein uS4 family. Part of the 30S ribosomal subunit. Contacts protein S5. The interaction surface between S4 and S5 is involved in control of translational fidelity.

One of the primary rRNA binding proteins, it binds directly to 16S rRNA where it nucleates assembly of the body of the 30S subunit. In terms of biological role, with S5 and S12 plays an important role in translational accuracy. The protein is Small ribosomal subunit protein uS4 of Phenylobacterium zucineum (strain HLK1).